The following is a 188-amino-acid chain: Accessory gene regulator protein B (188 aa).

Helical transmembrane passes span 49–69 (LALL…FLTL), 104–126 (ISFQ…YAPA), 143–163 (IKSI…PPPY), and 166–186 (FVVY…SIKE).

This sequence belongs to the AgrB family.

Its subcellular location is the cell membrane. In terms of biological role, essential for the production of a quorum sensing system signal molecule, the autoinducing peptide (AIP). This quorum sensing system is responsible for the regulation of the expression of virulence factor genes. Involved in the proteolytic processing of AgrD, the precursor of AIP. This Staphylococcus intermedius protein is Accessory gene regulator protein B.